The following is a 229-amino-acid chain: Leucyl/phenylalanyl-tRNA--protein transferase (229 aa).

Belongs to the L/F-transferase family.

It localises to the cytoplasm. It carries out the reaction N-terminal L-lysyl-[protein] + L-leucyl-tRNA(Leu) = N-terminal L-leucyl-L-lysyl-[protein] + tRNA(Leu) + H(+). The catalysed reaction is N-terminal L-arginyl-[protein] + L-leucyl-tRNA(Leu) = N-terminal L-leucyl-L-arginyl-[protein] + tRNA(Leu) + H(+). The enzyme catalyses L-phenylalanyl-tRNA(Phe) + an N-terminal L-alpha-aminoacyl-[protein] = an N-terminal L-phenylalanyl-L-alpha-aminoacyl-[protein] + tRNA(Phe). In terms of biological role, functions in the N-end rule pathway of protein degradation where it conjugates Leu, Phe and, less efficiently, Met from aminoacyl-tRNAs to the N-termini of proteins containing an N-terminal arginine or lysine. The polypeptide is Leucyl/phenylalanyl-tRNA--protein transferase (Desulforapulum autotrophicum (strain ATCC 43914 / DSM 3382 / VKM B-1955 / HRM2) (Desulfobacterium autotrophicum)).